The sequence spans 612 residues: uncharacterized protein (612 aa).

The zn(2)-C6 fungal-type DNA-binding region spans 6 to 32; the sequence is CLYCRRRKIKCDKNRPCHNCFVAKREC.

It localises to the cytoplasm. It is found in the nucleus. This is an uncharacterized protein from Schizosaccharomyces pombe (strain 972 / ATCC 24843) (Fission yeast).